We begin with the raw amino-acid sequence, 305 residues long: UDP-N-acetylenolpyruvoylglucosamine reductase (305 aa).

Residues 34 to 199 (RVGGPAQVLF…TSARFRGEVK (166 aa)) form the FAD-binding PCMH-type domain. Arg179 is an active-site residue. Ser228 functions as the Proton donor in the catalytic mechanism. Glu298 is a catalytic residue.

It belongs to the MurB family. FAD is required as a cofactor.

The protein resides in the cytoplasm. The enzyme catalyses UDP-N-acetyl-alpha-D-muramate + NADP(+) = UDP-N-acetyl-3-O-(1-carboxyvinyl)-alpha-D-glucosamine + NADPH + H(+). The protein operates within cell wall biogenesis; peptidoglycan biosynthesis. In terms of biological role, cell wall formation. The chain is UDP-N-acetylenolpyruvoylglucosamine reductase from Bradyrhizobium diazoefficiens (strain JCM 10833 / BCRC 13528 / IAM 13628 / NBRC 14792 / USDA 110).